The chain runs to 315 residues: Type II restriction enzyme AvaI (315 aa).

It catalyses the reaction Endonucleolytic cleavage of DNA to give specific double-stranded fragments with terminal 5'-phosphates.. Its function is as follows. A P subtype restriction enzyme that recognizes the double-stranded sequence 5'-CYCGRG-3' and cleaves after C-1. The chain is Type II restriction enzyme AvaI from Anabaena variabilis.